Consider the following 148-residue polypeptide: Glyoxalase domain-containing protein 5 (148 aa).

One can recognise a VOC domain in the interval 25-145 (RLDHIVMTVK…DRNLLEVSSY (121 aa)).

The protein belongs to the glyoxalase I family.

The polypeptide is Glyoxalase domain-containing protein 5 (Glod5) (Mus musculus (Mouse)).